We begin with the raw amino-acid sequence, 821 residues long: Spindle apparatus protein lin-5 (821 aa).

Positions 161–199 (EASSGFRTPKRNNYSLTSLQTPTATARRLRTASSTARRS) are disordered. Polar residues predominate over residues 162–180 (ASSGFRTPKRNNYSLTSLQ). Residues 181–199 (TPTATARRLRTASSTARRS) show a composition bias toward low complexity. The stretch at 211-634 (KFMRSERELK…REKESAEIKK (424 aa)) forms a coiled coil. Disordered stretches follow at residues 736 to 758 (RSES…FTPS) and 779 to 821 (LKCS…SKKQ).

Interacts with gpr-1; gpr-1 forms a complex with gpr-2 and GDP-bound goa-1.

The protein localises to the cytoplasm. The protein resides in the cell cortex. It is found in the cytoskeleton. It localises to the spindle. Its subcellular location is the chromosome. The protein localises to the centromere. The protein resides in the kinetochore. It is found in the microtubule organizing center. It localises to the centrosome. Functionally, essential component of the spindle apparatus required for spindle positioning and chromosome movement. Acts to recruit or anchor gpr-1/gpr-2 complex to the spindle and cortex. Also involved, directly or indirectly, in cytokinesis and in the coupling of DNA replication, centrosome duplication and mitotic division. The chain is Spindle apparatus protein lin-5 (lin-5) from Caenorhabditis elegans.